The following is a 209-amino-acid chain: MWLSPALLLLSFPGCLSIQGPALVRGPEQGSVTVQCRYSSRWQTNKKWWCRGASWSTCRVLIRSTGSEKETKSGRLSIRDNQKNHSFQVTMEMLRQNDTDTYWCGIEKFGTDRGTRVKVNVYSVGKDTMSTSNQLPWPTVDGSTDMVSSDLQKRTYYMLLVFVKVPALLILVGAVLWLKRSTQKVPEEQWRHTLCSDLDSELLAKDISP.

The N-terminal stretch at 1–17 is a signal peptide; the sequence is MWLSPALLLLSFPGCLS. The 103-residue stretch at 18 to 120 folds into the Ig-like V-type domain; it reads IQGPALVRGP…TDRGTRVKVN (103 aa). Topologically, residues 18-157 are extracellular; it reads IQGPALVRGP…SSDLQKRTYY (140 aa). Residues C36 and C104 are joined by a disulfide bond. Residue N97 is glycosylated (N-linked (GlcNAc...) asparagine). A helical transmembrane segment spans residues 158–178; that stretch reads MLLVFVKVPALLILVGAVLWL. Topologically, residues 179 to 209 are cytoplasmic; sequence KRSTQKVPEEQWRHTLCSDLDSELLAKDISP. S196 is subject to Phosphoserine.

This sequence belongs to the CD300 family. As to quaternary structure, interacts with TYROBP, which enhances cell surface expression and activation properties. May interact with HCST. N-glycosylated. Expressed in myeloid cells (at protein level).

It is found in the cell membrane. Acts as an activating immune receptor in mast cells through its interaction with ITAM-bearing adapter TYROBP. The sequence is that of CMRF35-like molecule 7 (Cd300lb) from Mus musculus (Mouse).